A 305-amino-acid chain; its full sequence is RNA-binding protein with serine-rich domain 1 (305 aa).

A compositionally biased stretch (basic residues) spans 1–10 (MDLSGVKKKS). The segment at 1 to 161 (MDLSGVKKKS…KRRSPSPKPT (161 aa)) is necessary for interaction with SRP54, nuclear localization and exon-skipping. Residues 1–170 (MDLSGVKKKS…TKVHIGRLTR (170 aa)) form a disordered region. The segment at 1–220 (MDLSGVKKKS…ENPDEAEKAL (220 aa)) is necessary for interaction with the cleaved p110 isoform of CDC2L1. Residues lysine 7 and lysine 15 each participate in a glycyl lysine isopeptide (Lys-Gly) (interchain with G-Cter in SUMO2) cross-link. Over residues 33–59 (DRSDEKSKDRSKDKGATKESSEKDRGR) the composition is skewed to basic and acidic residues. Serine 53 carries the post-translational modification Phosphoserine. Over residues 68-126 (ASSGSSSTRSRSSSTSSSGSSTSTGSSSGSSSSSASSRSGSSSTSRSSSSSSSSGSPSP) the composition is skewed to low complexity. Positions 69-121 (SSGSSSTRSRSSSTSSSGSSTSTGSSSGSSSSSASSRSGSSSTSRSSSSSSSS) are necessary for interactions with UPF2 and UPF3B and UPF2-dependent NMD. Composition is skewed to basic residues over residues 127–143 (SRRR…KSKP) and 151–167 (RKRR…HIGR). Phosphoserine occurs at positions 155 and 157. The tract at residues 156-242 (PSPKPTKVHI…ITATAVLAPW (87 aa)) is necessary for interaction with PNN and exon-skipping. Positions 159–244 (KPTKVHIGRL…ATAVLAPWPR (86 aa)) are interaction with SAP18 and ACIN1. Threonine 161 is modified (phosphothreonine). The RRM domain maps to 161-240 (TKVHIGRLTR…QEITATAVLA (80 aa)). The residue at position 218 (lysine 218) is an N6-acetyllysine. The tract at residues 238-305 (VLAPWPRPPP…RSRSSSNSSR (68 aa)) is necessary for interaction with TRA2B, nuclear localization and exon-skipping. The disordered stretch occupies residues 240–305 (APWPRPPPRR…RSRSSSNSSR (66 aa)). Residues 242–261 (WPRPPPRRFSPPRRMLPPLP) are compositionally biased toward pro residues. Residues 266–298 (SPPRMRRRSRSPRRRSPARRRSRSPGRRRHRSR) are compositionally biased toward basic residues.

Belongs to the splicing factor SR family. As to quaternary structure, found in mRNA splicing-dependent exon junction complexes (EJC). Found in a post-splicing complex with NXF1, RBM8A, UPF1, UPF2, UPF3A, UPF3B and RNPS1. Component of the heterotrimeric ASAP (apoptosis- and splicing-associated protein) and PSAP complexes consisting of RNPS1, SAP18 and either ACIN1 or PNN, respectively; the ASAP and PSAP complexes probably are formed mutually exclusive. Component of the active spliceosome. Associates with polysomes. Interacts with the cleaved p110 isoform of CDC2L1, CSNK2A1, PNN, SART3, SRP54, SRRM1 and TRA2B/SFRS10. Post-translationally, phosphorylated on one or more of the four Ser/Thr residues (Ser-43, Thr-49, Ser-52 or Ser-53). Ser-53 phosphorylation site is important for splicing and translation stimulation activity in vitro.

The protein localises to the nucleus. The protein resides in the nucleus speckle. It localises to the cytoplasm. Functionally, part of pre- and post-splicing multiprotein mRNP complexes. Auxiliary component of the splicing-dependent multiprotein exon junction complex (EJC) deposited at splice junction on mRNAs. The EJC is a dynamic structure consisting of core proteins and several peripheral nuclear and cytoplasmic associated factors that join the complex only transiently either during EJC assembly or during subsequent mRNA metabolism. Component of the ASAP and PSAP complexes which bind RNA in a sequence-independent manner and are proposed to be recruited to the EJC prior to or during the splicing process and to regulate specific excision of introns in specific transcription subsets. The ASAP complex can inhibit RNA processing during in vitro splicing reactions. The ASAP complex promotes apoptosis and is disassembled after induction of apoptosis. Enhances the formation of the ATP-dependent A complex of the spliceosome. Involved in both constitutive splicing and, in association with SRP54 and TRA2B/SFRS10, in distinctive modulation of alternative splicing in a substrate-dependent manner. Involved in the splicing modulation of BCL2L1/Bcl-X (and probably other apoptotic genes); specifically inhibits formation of proapoptotic isoforms such as Bcl-X(S); the activity is different from the established EJC assembly and function. Participates in mRNA 3'-end cleavage. Involved in UPF2-dependent nonsense-mediated decay (NMD) of mRNAs containing premature stop codons. Also mediates increase of mRNA abundance and translational efficiency. Binds spliced mRNA 20-25 nt upstream of exon-exon junctions. This chain is RNA-binding protein with serine-rich domain 1 (RNPS1), found in Bos taurus (Bovine).